The chain runs to 471 residues: Glutamate--tRNA ligase (471 aa).

The 'HIGH' region signature appears at 9–19 (PSPTGYLHVGG). Positions 98, 100, 125, and 127 each coordinate Zn(2+). Positions 237–241 (KLSKR) match the 'KMSKS' region motif. K240 is an ATP binding site.

The protein belongs to the class-I aminoacyl-tRNA synthetase family. Glutamate--tRNA ligase type 1 subfamily. In terms of assembly, monomer. Zn(2+) is required as a cofactor.

It localises to the cytoplasm. The enzyme catalyses tRNA(Glu) + L-glutamate + ATP = L-glutamyl-tRNA(Glu) + AMP + diphosphate. Functionally, catalyzes the attachment of glutamate to tRNA(Glu) in a two-step reaction: glutamate is first activated by ATP to form Glu-AMP and then transferred to the acceptor end of tRNA(Glu). The sequence is that of Glutamate--tRNA ligase from Salmonella schwarzengrund (strain CVM19633).